A 372-amino-acid polypeptide reads, in one-letter code: Glutamate 5-kinase (372 aa).

ATP is bound at residue Lys14. 3 residues coordinate substrate: Ser54, Asp141, and Asn153. 173–174 contacts ATP; the sequence is TD. Residues 280–358 form the PUA domain; that stretch reads RGRVVIDGGA…SEIESVLGHL (79 aa).

It belongs to the glutamate 5-kinase family.

It localises to the cytoplasm. The catalysed reaction is L-glutamate + ATP = L-glutamyl 5-phosphate + ADP. It functions in the pathway amino-acid biosynthesis; L-proline biosynthesis; L-glutamate 5-semialdehyde from L-glutamate: step 1/2. In terms of biological role, catalyzes the transfer of a phosphate group to glutamate to form L-glutamate 5-phosphate. This Cupriavidus taiwanensis (strain DSM 17343 / BCRC 17206 / CCUG 44338 / CIP 107171 / LMG 19424 / R1) (Ralstonia taiwanensis (strain LMG 19424)) protein is Glutamate 5-kinase.